The following is a 271-amino-acid chain: Calretinin (271 aa).

EF-hand domains are found at residues 16–51 (LTAS…LEKA), 63–98 (NFGE…EENF), 107–142 (GSSA…LLKK), 151–186 (KLQE…QENF), 195–230 (LTSE…LYEK), and 235–270 (MNIQ…SEPP). Ca(2+) is bound by residues aspartate 29, aspartate 31, asparagine 33, tyrosine 35, glutamate 40, aspartate 76, asparagine 78, aspartate 80, lysine 82, glutamate 87, aspartate 120, aspartate 122, serine 124, tyrosine 126, glutamate 131, aspartate 164, asparagine 166, aspartate 168, lysine 170, glutamate 175, aspartate 208, aspartate 210, serine 212, tyrosine 214, and glutamate 219. Tyrosine 214 is subject to Phosphotyrosine.

This sequence belongs to the calbindin family. In terms of tissue distribution, widely expressed in central nervous system. Expressed in type I unipolar brush cells of the cerebellum (at protein level).

The protein localises to the synapse. It localises to the cell projection. The protein resides in the dendrite. Its function is as follows. Calcium-binding protein involved in calcium homeostasis and signal transduction. It plays a critical role in buffering intracellular calcium levels and modulating calcium-dependent signaling pathways. Predominantly expressed in specific neuronal populations, influences synaptic plasticity and neuronal excitability, contributing to learning and memory. During embryonic development, it facilitates neuronal differentiation and maturation. The protein is Calretinin (Calb2) of Mus musculus (Mouse).